Consider the following 573-residue polypeptide: Zinc finger protein 10 (573 aa).

The KRAB domain maps to 14 to 85 (VTFKDVFVDF…EREIHQETHP (72 aa)). The segment at 206-232 (DSCASNSNECGQTFCQNIHLIQFARTH) adopts a C2H2-type 1; atypical zinc-finger fold. C2H2-type zinc fingers lie at residues 265-287 (YECK…QLIH), 293-315 (YECK…QKTH), 321-343 (YECK…QRTH), 349-371 (YTCN…QRTH), 377-399 (YECP…QRTH), 405-427 (YECN…HRIH), 433-455 (FECK…QRTH), 461-483 (YECH…QRIH), and 489-511 (YECC…QRIH). The segment at 517-539 (YKCNQCGIIFSQNSPFIVHQIAH) adopts a C2H2-type 11; atypical zinc-finger fold.

It belongs to the krueppel C2H2-type zinc-finger protein family. In terms of assembly, interacts (via the KRAB domain) with TRIM28 (via the RBCC domain).

The protein localises to the nucleus. Its function is as follows. May be involved in transcriptional regulation. The protein is Zinc finger protein 10 (ZNF10) of Homo sapiens (Human).